Consider the following 250-residue polypeptide: Hydroxyacylglutathione hydrolase (250 aa).

His-52, His-54, Asp-56, His-57, His-107, Asp-128, and His-166 together coordinate Zn(2+).

It belongs to the metallo-beta-lactamase superfamily. Glyoxalase II family. As to quaternary structure, monomer. Requires Zn(2+) as cofactor.

It catalyses the reaction an S-(2-hydroxyacyl)glutathione + H2O = a 2-hydroxy carboxylate + glutathione + H(+). The protein operates within secondary metabolite metabolism; methylglyoxal degradation; (R)-lactate from methylglyoxal: step 2/2. Its function is as follows. Thiolesterase that catalyzes the hydrolysis of S-D-lactoyl-glutathione to form glutathione and D-lactic acid. The chain is Hydroxyacylglutathione hydrolase from Neisseria gonorrhoeae (strain ATCC 700825 / FA 1090).